The primary structure comprises 793 residues: Putative potassium transporter 8 (793 aa).

The Cytoplasmic segment spans residues 1-22 (MDLEFGRGMRSPQRDSWKTTLL). Residues 23–43 (LAYQSLGVVYGDLSISPLYVF) form a helical membrane-spanning segment. Residues 44-59 (KSTFAEDIQHSETNEE) are Extracellular-facing. Residues 60–80 (IFGVLSFVFWTLTLIPLIKYV) traverse the membrane as a helical segment. Residues 81 to 151 (SIVLRADDNG…EKHKKLHTAL (71 aa)) are Cytoplasmic-facing. The helical transmembrane segment at 152–172 (LIMVLIGTCMVIGDGVLTPAI) threads the bilayer. Over 173-191 (SVFSAVSGLEFSLSKDHRE) the chain is Extracellular. Residues 192-212 (YAVIPITCVILAFLFALQHYG) form a helical membrane-spanning segment. Residues 213–215 (THR) are Cytoplasmic-facing. The helical transmembrane segment at 216–236 (VGFLFAPIVLAWLICMSALGL) threads the bilayer. Residues 237-264 (YNIIHWNPHVYQALNPCYMFKFLKKTRK) are Extracellular-facing. Residues 265–285 (YGWMSLGGILLCMTGSEAMFA) form a helical membrane-spanning segment. The Cytoplasmic segment spans residues 286–292 (DLGHFSY). Residues 293–313 (SAIQLAFTSLVYPALILAYMG) form a helical membrane-spanning segment. The Extracellular portion of the chain corresponds to 314-343 (QAAYLSKHHDFYSNSQVGFYIAVPDKVRWP). Residues 344-364 (VLVLAILASVVGSQAIISGTF) form a helical membrane-spanning segment. Residues 365–391 (SIINQSQSLSCFPRVKVVHTSDKIHGQ) lie on the Cytoplasmic side of the membrane. Residues 392–412 (IYIPEINWLLMILCIAVTVGF) traverse the membrane as a helical segment. Residues 413-422 (RDTKHMGNAS) are Extracellular-facing. Asparagine 420 is a glycosylation site (N-linked (GlcNAc...) asparagine). Residues 423–443 (GLAVITVMLVTTCLTSLVIML) form a helical membrane-spanning segment. Over 444-448 (CWRRP) the chain is Cytoplasmic. The chain crosses the membrane as a helical span at residues 449 to 469 (PVLALCFLLFFGSVEALYFSA). The Extracellular portion of the chain corresponds to 470-473 (SLIK). Residues 474–494 (FLEGAWLPILLALFLMAVMLV) traverse the membrane as a helical segment. Residues 495–793 (WHYTTIKKYE…LLEVGMVYVL (299 aa)) are Cytoplasmic-facing. The segment covering 664 to 675 (DSVQHSSAASVE) has biased composition (polar residues). The interval 664–698 (DSVQHSSAASVETTTTRRRSGGGDDDGSPGGGGGR) is disordered.

This sequence belongs to the HAK/KUP transporter (TC 2.A.72.3) family.

Its subcellular location is the membrane. High-affinity potassium transporter. This chain is Putative potassium transporter 8 (HAK8), found in Oryza sativa subsp. japonica (Rice).